Consider the following 152-residue polypeptide: Superoxide dismutase [Cu-Zn] (152 aa).

Cu cation-binding residues include H45, H47, and H62. A disulfide bridge connects residues C56 and C145. Zn(2+) is bound by residues H62, H70, H79, and D82. H119 is a binding site for Cu cation.

The protein belongs to the Cu-Zn superoxide dismutase family. Homodimer. Cu cation is required as a cofactor. Zn(2+) serves as cofactor.

Its subcellular location is the cytoplasm. It catalyses the reaction 2 superoxide + 2 H(+) = H2O2 + O2. Functionally, destroys radicals which are normally produced within the cells and which are toxic to biological systems. In Spinacia oleracea (Spinach), this protein is Superoxide dismutase [Cu-Zn] (SODCC).